The primary structure comprises 288 residues: Cell division protein ZipA (288 aa).

Residue methionine 1 is a topological domain, periplasmic. Residues 2–22 (EIGLREWLIVIGIIVIAGILF) form a helical membrane-spanning segment. The Cytoplasmic segment spans residues 23 to 288 (DGWRRMRGGK…ERRALTQRRG (266 aa)). The tract at residues 48-138 (DEEETTSAEV…DDKPAQRITE (91 aa)) is disordered. Composition is skewed to basic and acidic residues over residues 64 to 77 (LDTH…EHDL), 85 to 105 (RDNK…KDEP), and 122 to 138 (ARDD…RITE).

Belongs to the ZipA family. As to quaternary structure, interacts with FtsZ via their C-terminal domains.

The protein localises to the cell inner membrane. Its function is as follows. Essential cell division protein that stabilizes the FtsZ protofilaments by cross-linking them and that serves as a cytoplasmic membrane anchor for the Z ring. Also required for the recruitment to the septal ring of downstream cell division proteins. This is Cell division protein ZipA from Pseudomonas syringae pv. tomato (strain ATCC BAA-871 / DC3000).